Reading from the N-terminus, the 438-residue chain is UDP-glycosyltransferase 84B2 (438 aa).

UDP-alpha-D-glucose contacts are provided by residues Ser260, 314-316 (GQQ), 331-339 (HCGWNSTIE), and 353-356 (WIDQ).

This sequence belongs to the UDP-glycosyltransferase family.

The polypeptide is UDP-glycosyltransferase 84B2 (UGT84B2) (Arabidopsis thaliana (Mouse-ear cress)).